The primary structure comprises 433 residues: B3 domain-containing protein Os04g0676600 (433 aa).

Disordered regions lie at residues 1–29 and 216–283; these read MADT…GGGQ and FPPV…NSAN. Positions 13–24 are enriched in basic and acidic residues; it reads GDDRGREGHDDF. The span at 216–229 shows a compositional bias: low complexity; the sequence is FPPVSSSSRSFSSA. Residues 237 to 265 are compositionally biased toward basic and acidic residues; it reads DAKKAKKSDIKDQPIVLRRSDTESEKNDE. The span at 269–283 shows a compositional bias: polar residues; it reads TPASEPSSMSHNSAN. A DNA-binding region (TF-B3) is located at residues 297-399; that stretch reads LRKELTNSDV…KLVVRGEKAI (103 aa).

It localises to the nucleus. Its function is as follows. Probable transcription regulator that binds specifically to the DNA sequence 5'-CATGC-3' of the IDE1 element found in the promoter of the barley iron deficiency-inducible gene IDS2. This Oryza sativa subsp. japonica (Rice) protein is B3 domain-containing protein Os04g0676600.